The sequence spans 623 residues: Actin-related protein 8 (623 aa).

Basic and acidic residues predominate over residues M1–R24. Positions M1–P29 are disordered. Position 283-286 (D283–D286) interacts with ATP. Residues T428 to A438 are compositionally biased toward low complexity. A disordered region spans residues T428–C458.

The protein belongs to the actin family. ARP8 subfamily. In terms of assembly, component of the chromatin remodeling INO80 complex; specifically part of a complex module associated with the DBINO domain of INO80. Exists as monomers and dimers, but the dimer is most probably the biologically relevant form required for stable interactions with histones that exploits the twofold symmetry of the nucleosome core.

It localises to the nucleus. It is found in the chromosome. Its function is as follows. Plays an important role in the functional organization of mitotic chromosomes. Exhibits low basal ATPase activity, and unable to polymerize. Proposed core component of the chromatin remodeling INO80 complex which is involved in transcriptional regulation, DNA replication and probably DNA repair. Required for the recruitment of INO80 (and probably the INO80 complex) to sites of DNA damage Strongly prefer nucleosomes and H3-H4 tetramers over H2A-H2B dimers, suggesting it may act as a nucleosome recognition module within the complex. In Danio rerio (Zebrafish), this protein is Actin-related protein 8 (actr8).